A 535-amino-acid polypeptide reads, in one-letter code: MDQGAPAKPSEQKVPSLRTRWEILLLTLCLLHGSSMTPPHRRSHSRWLQAGSPQFRTHLYNVEAHTAPTPLCCWKNSLSGTNALRGPRLVTGNTGGAVTIHCHYAPSSVNRHQRKYWCRLGSPLWICHTVVSTNQYTHPDYRGRAALTDIPQSGLFVVRLLRLSLGDVGLYRCGIGDRNDMLFFSVNLTVSAGPSNTTYAAAPASGEPTTASPGAASSAGNGWTSGITQILEGSGSEWDRTVPTTGTSKTTSSANGRQTLRTARTMVPGTGSREEGSIRAAVPTPEGPSPKSRSMSSTTQGVWLWSTRNSVTPSVTTSEGRRQGTTPETDGPRDETDVRVSPEAPRKTTGTTRPSALISEHVTWETLQDKTEVSKQQMLHSLEELSPAPSAQTLNATCLEVASEEGRSIDGSLENTTEESSPPTPSQLSVAGPVWVSVKGPSMKSALMEGESHTRILTPVSTVLALLLIAALILLKRSLGRQRTSQKKERVPRITLIQMTHFLPDKLPDEGKNFQQSNLLPPQASLTVLENDPRP.

A signal peptide spans 1-35 (MDQGAPAKPSEQKVPSLRTRWEILLLTLCLLHGSS). Over 36-455 (MTPPHRRSHS…ALMEGESHTR (420 aa)) the chain is Extracellular. The mediates immunoglobulin Fc fragment-binding stretch occupies residues 95–117 (GGAVTIHCHYAPSSVNRHQRKYW). In terms of domain architecture, Ig-like V-type spans 95–189 (GGAVTIHCHY…DMLFFSVNLT (95 aa)). Cysteines 102 and 173 form a disulfide. Residue Asn-187 is glycosylated (N-linked (GlcNAc...) asparagine). 2 disordered regions span residues 201-360 (AAPA…LISE) and 405-430 (EGRS…QLSV). Composition is skewed to low complexity over residues 208-220 (PTTA…SSAG) and 241-253 (TVPT…TTSS). The segment covering 291-328 (KSRSMSSTTQGVWLWSTRNSVTPSVTTSEGRRQGTTPE) has biased composition (polar residues). Over residues 330 to 346 (DGPRDETDVRVSPEAPR) the composition is skewed to basic and acidic residues. Polar residues predominate over residues 413–429 (LENTTEESSPPTPSQLS). A helical transmembrane segment spans residues 456-476 (ILTPVSTVLALLLIAALILLK). Over 477–535 (RSLGRQRTSQKKERVPRITLIQMTHFLPDKLPDEGKNFQQSNLLPPQASLTVLENDPRP) the chain is Cytoplasmic. Residues 507 to 535 (LPDEGKNFQQSNLLPPQASLTVLENDPRP) form a disordered region. Over residues 513–528 (NFQQSNLLPPQASLTV) the composition is skewed to polar residues.

Interacts with IGHM; this interaction facilitates the endocytosis of IgM-coated microbes and IgM-antigen immune complexes. N-glycosylated. Expressed in several tissues including thymus, spleen, liver, kidney, small and large intestine, testis and placenta. Expressed by oligodendrocytes, B-cells and macrophages but not granulocytes, T-cells or NK cells (at protein level).

It localises to the cell membrane. Functions as a receptor for the Fc fragment of IgA and IgM. Binds IgA and IgM with high affinity and mediates their endocytosis. May function in the immune response to microbes mediated by IgA and IgM. In Mus musculus (Mouse), this protein is High affinity immunoglobulin alpha and immunoglobulin mu Fc receptor (Fcamr).